The chain runs to 477 residues: Bifunctional protein HldE (477 aa).

The tract at residues 1–319 (MTVIFPNFSK…NIMNSHICTT (319 aa)) is ribokinase. 195 to 198 (NISE) is a binding site for ATP. D264 is an active-site residue. Positions 346-477 (MTNGVFDILH…NIINAIKRKN (132 aa)) are cytidylyltransferase.

This sequence in the N-terminal section; belongs to the carbohydrate kinase PfkB family. In the C-terminal section; belongs to the cytidylyltransferase family. As to quaternary structure, homodimer.

It carries out the reaction D-glycero-beta-D-manno-heptose 7-phosphate + ATP = D-glycero-beta-D-manno-heptose 1,7-bisphosphate + ADP + H(+). It catalyses the reaction D-glycero-beta-D-manno-heptose 1-phosphate + ATP + H(+) = ADP-D-glycero-beta-D-manno-heptose + diphosphate. It functions in the pathway nucleotide-sugar biosynthesis; ADP-L-glycero-beta-D-manno-heptose biosynthesis; ADP-L-glycero-beta-D-manno-heptose from D-glycero-beta-D-manno-heptose 7-phosphate: step 1/4. It participates in nucleotide-sugar biosynthesis; ADP-L-glycero-beta-D-manno-heptose biosynthesis; ADP-L-glycero-beta-D-manno-heptose from D-glycero-beta-D-manno-heptose 7-phosphate: step 3/4. In terms of biological role, catalyzes the phosphorylation of D-glycero-D-manno-heptose 7-phosphate at the C-1 position to selectively form D-glycero-beta-D-manno-heptose-1,7-bisphosphate. Functionally, catalyzes the ADP transfer from ATP to D-glycero-beta-D-manno-heptose 1-phosphate, yielding ADP-D-glycero-beta-D-manno-heptose. This Blochmanniella pennsylvanica (strain BPEN) protein is Bifunctional protein HldE.